Here is a 322-residue protein sequence, read N- to C-terminus: MVVSISIRGSLLKVSGNPSRWGRLDNLFGLPTLDSCVSVFNTILAEIGLPQFTKCKRLMPGQAKENEKAPLVADGAIIKEVHITSNRAAGKGNEDDYISGLSTQPYRNSVPRLHSNGKSVDWLSKKGNVNLIYPTVYNKAHEMELHSLTKIKNRFSEQSREYNYLLDIISFCKENGVVRFEQKLKSRFLQKNALNYWGLSDYSILNKLHSDFLELDKKLSVNAMDFETISDHLVSSGVVETTRAANTTAMYAIQWFHGHVFDFNKKQVQTHRARLRKIGIDIAQKCNVSKFSPVIVKQTREIKVQECVAPSWYVRPSHLRVA.

It belongs to the inovirus G2P protein family.

The catalysed reaction is ATP + (deoxyribonucleotide)n-3'-hydroxyl + 5'-phospho-(deoxyribonucleotide)m = (deoxyribonucleotide)n+m + AMP + diphosphate.. Its function is as follows. Isoform G2P plays an essential role in viral DNA replication. Binds the origin of replication and cleaves the dsDNA replicative form I (RFI) and becomes covalently bound to it via phosphotyrosine bond, generating the dsDNA replicative form II (RFII). In turn, viral DNA replication initiates at the 3'-OH of the cleavage site. After one round of rolling circle synthesis, protein G2P is linked to the newly synthesized ssDNA and joins the ends of the displaced strand to generate a circular single-stranded molecule ready to be packed into a virion. Isoform G10P protein binds to double-stranded DNA and prevents hydrolysis by nucleases. Additionally, G10P is an inhibitor of DNA replication and may have a role in the transition from semiconservative replicative form DNA replication to single-stranded DNA synthesis in the life cycle. This is Replication-associated protein G2P (II) from Escherichia phage If1 (Bacteriophage If1).